The chain runs to 54 residues: Chymosin (54 aa).

The propeptide at 1–27 (SEITRVPLHKGKSLRKALKEHGLLEBF) is activation peptide.

The protein belongs to the peptidase A1 family. Monomer.

The catalysed reaction is Broad specificity similar to that of pepsin A. Clots milk by cleavage of a single 104-Ser-Phe-|-Met-Ala-107 bond in kappa-chain of casein.. In terms of biological role, chymosin is synthesized in the mucosa of the stomach. The enzyme hydrolyzes casein to paracasein. This chain is Chymosin (CYM), found in Felis catus (Cat).